A 428-amino-acid chain; its full sequence is Kynureninase (428 aa).

Residues T104, T105, 132 to 135 (FPSD), D213, H216, and Y238 each bind pyridoxal 5'-phosphate. K239 bears the N6-(pyridoxal phosphate)lysine mark. W267 and T295 together coordinate pyridoxal 5'-phosphate.

Belongs to the kynureninase family. As to quaternary structure, homodimer. Pyridoxal 5'-phosphate serves as cofactor.

It carries out the reaction L-kynurenine + H2O = anthranilate + L-alanine + H(+). It catalyses the reaction 3-hydroxy-L-kynurenine + H2O = 3-hydroxyanthranilate + L-alanine + H(+). The protein operates within amino-acid degradation; L-kynurenine degradation; L-alanine and anthranilate from L-kynurenine: step 1/1. It functions in the pathway cofactor biosynthesis; NAD(+) biosynthesis; quinolinate from L-kynurenine: step 2/3. Catalyzes the cleavage of L-kynurenine (L-Kyn) and L-3-hydroxykynurenine (L-3OHKyn) into anthranilic acid (AA) and 3-hydroxyanthranilic acid (3-OHAA), respectively. The protein is Kynureninase of Bacillus anthracis.